Here is a 561-residue protein sequence, read N- to C-terminus: Carboxylesterase patB (561 aa).

The signal sequence occupies residues 1-19; it reads MQIINWASLLLVTWETVVA. Asparagine 38, asparagine 69, and asparagine 109 each carry an N-linked (GlcNAc...) asparagine glycan. The Acyl-ester intermediate role is filled by serine 263. Serine 263 contributes to the substrate binding site. N-linked (GlcNAc...) asparagine glycosylation is present at asparagine 316. Residue glutamate 385 is the Charge relay system of the active site. N-linked (GlcNAc...) asparagine glycosylation is found at asparagine 393, asparagine 412, asparagine 429, and asparagine 496.

The protein belongs to the type-B carboxylesterase/lipase family.

It is found in the cytoplasm. The protein localises to the cytosol. It catalyses the reaction a carboxylic ester + H2O = an alcohol + a carboxylate + H(+). It functions in the pathway mycotoxin biosynthesis; patulin biosynthesis. In terms of biological role, carboxylesterase; part of the gene cluster that mediates the biosynthesis of patulin, an acetate-derived tetraketide mycotoxin produced by several fungal species that shows antimicrobial properties against several bacteria. The function of patB in patulin synthesis has still to be characterized. The pathway begins with the synthesis of 6-methylsalicylic acid by the polyketide synthase (PKS) patK via condensation of acetate and malonate units. The 6-methylsalicylic acid decarboxylase patG then catalyzes the decarboxylation of 6-methylsalicylic acid to yield m-cresol (also known as 3-methylphenol). These first reactions occur in the cytosol. The intermediate m-cresol is then transported into the endoplasmic reticulum where the cytochrome P450 monooxygenase patH converts it to m-hydroxybenzyl alcohol, which is further converted to gentisyl alcohol by the cytochrome P450 monooxygenase patI. The oxidoreductases patJ and patO further convert gentisyl alcohol to isoepoxydon in the vacuole. PatN catalyzes then the transformation of isoepoxydon into phyllostine. The cluster protein patF is responsible for the conversion from phyllostine to neopatulin whereas the alcohol dehydrogenase patD converts neopatulin to E-ascladiol. The steps between isoepoxydon and E-ascladiol occur in the cytosol, and E-ascladiol is probably secreted to the extracellular space by one of the cluster-specific transporters patC or patM. Finally, the secreted patulin synthase patE catalyzes the conversion of E-ascladiol to patulin. In Penicillium expansum (Blue mold rot fungus), this protein is Carboxylesterase patB.